The chain runs to 148 residues: MAVHKEVNFVAYLLIVLGMFLYVDAKACTRECGNLGFGICPRSEGSPLNPICINCCSGYKGCNYYNSFGKFICEGESDPKRPNACTFNCDPNIAYSRCPRSQGKSLIYPTGCTTCCTGYKGCYYFGKDGKFVCEGESDEPKANMYPVM.

Positions methionine 1–alanine 25 are cleaved as a signal peptide. One copy of the 1; trypsin-inhibitory repeat lies at lysine 26–arginine 81. Disulfide bonds link cysteine 28/cysteine 116, cysteine 32/cysteine 112, cysteine 40/cysteine 122, cysteine 52/cysteine 89, cysteine 55/cysteine 73, cysteine 56/cysteine 85, cysteine 62/cysteine 98, and cysteine 115/cysteine 133. One copy of the 2; chymotrypsin-inhibitory repeat lies at asparagine 83 to lysine 141.

The protein belongs to the protease inhibitor I20 (potato type II proteinase inhibitor) family.

It localises to the secreted. Functionally, potent inhibitor of both trypsin and chymotrypsin. This chain is Wound-induced proteinase inhibitor 2, found in Solanum lycopersicum (Tomato).